The primary structure comprises 1746 residues: tRNA (32-2'-O)-methyltransferase regulator THADA (1746 aa).

A coiled-coil region spans residues 1252 to 1286 (EQALAEIRRIVVELKALQLRLKNTEAANTKLNTNV).

This sequence belongs to the THADA family. Interacts with SERCA. As to expression, detected in the larval fat body, salivary glands and wing imaginal disks (at protein level).

It is found in the endoplasmic reticulum. Its function is as follows. Together with methyltransferase Trm7-32, methylates the 2'-O-ribose of nucleotides at position 32 of the anticodon loop of substrate tRNAs. Plays a key role in energy homeostasis by regulating the balance between energy storage and heat production. Functions by negatively regulating Ca(2+) signaling pathways that are involved in heat production and maintaining correct lipid storage in the fat body. Regulates Ca(2+) signaling pathways by reducing the activity of the calcium-transporting ATPase SERCA possibly by promoting uncoupling of SERCA ATP hydrolysis from calcium pumping. May also function in the nervous system to control feeding behavior. This Drosophila melanogaster (Fruit fly) protein is tRNA (32-2'-O)-methyltransferase regulator THADA.